Consider the following 1061-residue polypeptide: TonB-dependent transporter Oar (1061 aa).

Positions 1-26 are cleaved as a signal peptide; that stretch reads MHLNRVLRETGVVVAAGLLYGSAAFA. In terms of domain architecture, TBDR plug spans 121 to 243; sequence EIVGAPPTID…TGGVINAVTR (123 aa). The TBDR beta-barrel domain maps to 248 to 1061; it reads EFHGSVFANW…QVRFGIRYTF (814 aa). The tract at residues 701–722 is disordered; the sequence is RSLAEPGQGTATSCDPSSFESQ. Polar residues predominate over residues 709-722; that stretch reads GTATSCDPSSFESQ.

The protein belongs to the TonB-dependent receptor family. In terms of assembly, interacts with TonB. Part of a transport system composed of the outer membrane transporter Oar, the trans-periplasmic binding protein TonB and the inner membrane proteins ExbB and ExbD.

The protein localises to the cell outer membrane. In terms of biological role, required for secretion of the protease PopC across the bacterial outer membrane. Binds and probably transports PopC from the periplasm to the extracellular milieu. It derives its energy for transport by interacting with the trans-periplasmic membrane protein TonB. Required for cellular adhesion during fruiting body formation, a multicellular developmental program that is induced in response to starvation. The polypeptide is TonB-dependent transporter Oar (Myxococcus xanthus).